Reading from the N-terminus, the 317-residue chain is Glucokinase (317 aa).

Belongs to the ROK (NagC/XylR) family. Homodimer. It depends on a divalent metal cation as a cofactor.

The catalysed reaction is D-glucose + ATP = D-glucose 6-phosphate + ADP + H(+). In terms of biological role, catalyzes the phosphorylation of D-glucose to D-glucose 6-phosphate using ATP as the phosphate donor. Can also phosphorylate 2-deoxyglucose, with lower efficiency. ITP can also serve as a phosphoryl donor. The protein is Glucokinase of Thermotoga maritima (strain ATCC 43589 / DSM 3109 / JCM 10099 / NBRC 100826 / MSB8).